An 85-amino-acid chain; its full sequence is MAQKKGGGSTRNGRDSKPKMLGVKAFGGELISAGSIIVRQRGTQFHPGVNVGVGKDHTLFALVDGHVSFGVKGALNKHMVNVTPA.

It belongs to the bacterial ribosomal protein bL27 family.

This Variovorax paradoxus (strain S110) protein is Large ribosomal subunit protein bL27.